The sequence spans 378 residues: MELKKLMEHISIIPDYRQTWKVEHKLSDILLLTICAVISGAEGWEDIEDFGETHLDFLKQYGDFENGIPVHDTIARVVSCISPAKFHECFINWMRDCHSSDDKDVIAIDGKTLRHSYDKSRRRGAIHVISAFSTMHSLVIGQIKTDEKSNEITAIPELLNMLDIKGKIITTDAMGCQKDIAEKIQKQGGDYLFAVKGTQGRLNKAFEEKFPLKELNNPEHDSYAISEKSHGREEIRLHIVCDVPDELIDFTFEWKGLKKLCVAVSFRSIIAEQKKEPEMTVRYYISSADLTAEKFATAIRNHWHVENKLHWRLDVVMNEDDCKIRRGNAAELFSGIRHIAINILTNDKVFKAGLRRKMRKAAMDRNYLASVLAGSGLS.

This sequence belongs to the transposase 11 family.

The protein is H repeat-associated putative transposase YhhI (yhhI) of Escherichia coli (strain K12).